Consider the following 350-residue polypeptide: Ornithine cyclodeaminase (350 aa).

The L-ornithine site is built by R45 and K69. NAD(+) is bound by residues T84, R112, 139-140, D161, T202, 225-228, K232, and S293; these read AQ and VGGD. R112 is an L-ornithine binding site. Residue D228 coordinates L-ornithine. D228 functions as the Proton donor/acceptor in the catalytic mechanism. Residue V294 participates in L-ornithine binding. Position 331 (K331) interacts with NAD(+).

This sequence belongs to the ornithine cyclodeaminase/mu-crystallin family. In terms of assembly, homodimer. Requires NAD(+) as cofactor.

It catalyses the reaction L-ornithine = L-proline + NH4(+). It functions in the pathway amino-acid biosynthesis; L-proline biosynthesis; L-proline from L-ornithine: step 1/1. Its function is as follows. Catalyzes the conversion of L-ornithine into L-proline with release of ammonia. Is likely involved in the L-ornithine degradation pathway that allows P.putida to utilize this compound as sole carbon and nitrogen source. The protein is Ornithine cyclodeaminase of Pseudomonas putida (strain ATCC 47054 / DSM 6125 / CFBP 8728 / NCIMB 11950 / KT2440).